A 549-amino-acid chain; its full sequence is MANVVVTGEALDKSIREVVRILEDAVGCTAGPKGLTVAISKPYGSPEITKDGYKVMKSIKPEEPLAVAIANIITQSASQCNDKVGDGTTTCSILTAKVIEEVSRAKAAGADTISIKNGILKAKEAVLTALLSMKREVASEDEIAQVATISANGDKNIGGKIAQCVREVGKDGVITVEESKGFKDLEVERTDGMQFDRGYLSPYFVTNAEKMLVEFENPYIFLTEKKINLVQSILPVLENVARSGRPLLIIAEDVEGEALSTLVLNKLRGGLQVAAVKAPGFGDRRKDMLGDIAVIAGAKYVVNDELAVKVEDITLDDLGTAKTVRITKDTTTIIGSVDSNADSITSRISQIKSQIEVSSSDYDKEKLKERLAKLSGGVAVLKVGGSSEVEVKERKDRVEDALHATRAAVEEGVVPGGGAALLYTLASLDGIKGKNDDEQLGINIIKRAVCAPIKRIIKNSGSEEAPCVIQHLMKQNDKELIFNVDTMNYANAFASGVMDPLKVVRIAFDLAVSLAAVFMTLNAVVVDVPSKEDTAGGGAAGGMGGMGGF.

Residues Thr29 to Pro32, Lys50, Asp86 to Thr90, Gly417, and Asp499 each bind ATP.

This sequence belongs to the chaperonin (HSP60) family. Forms a cylinder of 14 subunits composed of two heptameric rings stacked back-to-back. Interacts with the co-chaperonin GroES.

The protein resides in the cytoplasm. It carries out the reaction ATP + H2O + a folded polypeptide = ADP + phosphate + an unfolded polypeptide.. In terms of biological role, together with its co-chaperonin GroES, plays an essential role in assisting protein folding. The GroEL-GroES system forms a nano-cage that allows encapsulation of the non-native substrate proteins and provides a physical environment optimized to promote and accelerate protein folding. This is Chaperonin GroEL from Anaplasma marginale (strain Florida).